A 375-amino-acid chain; its full sequence is Ribonuclease D (375 aa).

A 3'-5' exonuclease domain is found at 3–169; the sequence is YQMITTDDAL…LPITAKLMVE (167 aa). The 80-residue stretch at 210 to 289 folds into the HRDC domain; sequence RTRQLACLQL…EKAQTLPEDA (80 aa).

Belongs to the RNase D family. Requires a divalent metal cation as cofactor.

Its subcellular location is the cytoplasm. It catalyses the reaction Exonucleolytic cleavage that removes extra residues from the 3'-terminus of tRNA to produce 5'-mononucleotides.. Exonuclease involved in the 3' processing of various precursor tRNAs. Initiates hydrolysis at the 3'-terminus of an RNA molecule and releases 5'-mononucleotides. This is Ribonuclease D from Escherichia coli (strain K12).